A 135-amino-acid chain; its full sequence is Integration host factor subunit beta (135 aa).

Basic and acidic residues predominate over residues Gly-83–Arg-92. The disordered stretch occupies residues Gly-83–Ser-135. Polar residues predominate over residues Thr-111 to Ala-122.

This sequence belongs to the bacterial histone-like protein family. In terms of assembly, heterodimer of an alpha and a beta chain.

In terms of biological role, this protein is one of the two subunits of integration host factor, a specific DNA-binding protein that functions in genetic recombination as well as in transcriptional and translational control. This is Integration host factor subunit beta from Cupriavidus metallidurans (strain ATCC 43123 / DSM 2839 / NBRC 102507 / CH34) (Ralstonia metallidurans).